The following is a 459-amino-acid chain: Cysteine--tRNA ligase (459 aa).

Cys-28 contributes to the Zn(2+) binding site. Positions 30-40 (ITIYDLCHIGH) match the 'HIGH' region motif. Cys-209, His-234, and Glu-238 together coordinate Zn(2+). Residues 266–270 (KMSKS) carry the 'KMSKS' region motif. Lys-269 contacts ATP.

This sequence belongs to the class-I aminoacyl-tRNA synthetase family. In terms of assembly, monomer. Requires Zn(2+) as cofactor.

The protein localises to the cytoplasm. The catalysed reaction is tRNA(Cys) + L-cysteine + ATP = L-cysteinyl-tRNA(Cys) + AMP + diphosphate. In Shewanella denitrificans (strain OS217 / ATCC BAA-1090 / DSM 15013), this protein is Cysteine--tRNA ligase.